A 510-amino-acid polypeptide reads, in one-letter code: Histidine ammonia-lyase (510 aa).

The 5-imidazolinone (Ala-Gly) cross-link spans 143 to 145 (ASG). Position 144 is a 2,3-didehydroalanine (Ser) (Ser-144).

Belongs to the PAL/histidase family. In terms of processing, contains an active site 4-methylidene-imidazol-5-one (MIO), which is formed autocatalytically by cyclization and dehydration of residues Ala-Ser-Gly.

It localises to the cytoplasm. The enzyme catalyses L-histidine = trans-urocanate + NH4(+). The protein operates within amino-acid degradation; L-histidine degradation into L-glutamate; N-formimidoyl-L-glutamate from L-histidine: step 1/3. The polypeptide is Histidine ammonia-lyase (Photobacterium profundum (strain SS9)).